A 365-amino-acid polypeptide reads, in one-letter code: uncharacterized protein (365 aa).

6 helical membrane-spanning segments follow: residues 3–23 (MDTS…LYSI), 60–80 (IGII…LNII), 100–120 (VFLF…LIAI), 141–161 (SGIL…GDEF), 171–191 (AIAS…IPLL), and 280–300 (TALF…LALF).

This sequence to S.solfataricus C04034.

It is found in the cell membrane. This is an uncharacterized protein from Methanocaldococcus jannaschii (strain ATCC 43067 / DSM 2661 / JAL-1 / JCM 10045 / NBRC 100440) (Methanococcus jannaschii).